We begin with the raw amino-acid sequence, 420 residues long: Probable acetate kinase (420 aa).

Position 10 (N10) interacts with Mg(2+). Position 17 (K17) interacts with ATP. R97 lines the substrate pocket. D153 functions as the Proton donor/acceptor in the catalytic mechanism. 213–217 (HIGSG) contacts ATP. A Mg(2+)-binding site is contributed by E403.

The protein belongs to the acetokinase family. Mg(2+) is required as a cofactor.

It carries out the reaction acetate + ATP = acetyl phosphate + ADP. It participates in metabolic intermediate biosynthesis; acetyl-CoA biosynthesis; acetyl-CoA from acetate: step 1/2. In Emericella nidulans (strain FGSC A4 / ATCC 38163 / CBS 112.46 / NRRL 194 / M139) (Aspergillus nidulans), this protein is Probable acetate kinase.